We begin with the raw amino-acid sequence, 391 residues long: Aspartic protease 17 (391 aa).

The signal sequence occupies residues Met1–Ala15. The Peptidase A1 domain occupies Tyr65–Ala385. N-linked (GlcNAc...) asparagine glycosylation is present at Asn68. Asp83 is a catalytic residue. The N-linked (GlcNAc...) asparagine glycan is linked to Asn108. Asp274 is a catalytic residue. Cys309 and Cys345 are oxidised to a cystine.

The protein belongs to the peptidase A1 family. As to expression, expressed in intestinal cells.

It localises to the secreted. Functionally, aspartic proteinase. This chain is Aspartic protease 17, found in Caenorhabditis elegans.